The chain runs to 186 residues: Ribonuclease M5 (186 aa).

A Toprim domain is found at 6–89 (SQVIVVEGRD…AFLKRDEAVP (84 aa)). Residues Glu-12, Asp-58, and Asp-60 each coordinate Mg(2+).

The protein belongs to the ribonuclease M5 family. Requires Mg(2+) as cofactor.

The protein resides in the cytoplasm. It carries out the reaction Endonucleolytic cleavage of RNA, removing 21 and 42 nucleotides, respectively, from the 5'- and 3'-termini of a 5S-rRNA precursor.. Its function is as follows. Required for correct processing of both the 5' and 3' ends of 5S rRNA precursor. Cleaves both sides of a double-stranded region yielding mature 5S rRNA in one step. This Streptococcus pneumoniae (strain ATCC BAA-255 / R6) protein is Ribonuclease M5.